The chain runs to 151 residues: Mediator of RNA polymerase II transcription subunit 32 (151 aa).

The segment at 128 to 151 is disordered; it reads GVAPGSVHSSSTGFDSRFSEDSTQ.

Belongs to the mediator complex subunit 32 family. Oligomers. Component of the Mediator complex. Interacts with MED6. Interacts with GEBPL.

It localises to the nucleus. Functionally, component of the Mediator complex, a coactivator involved in the regulated transcription of nearly all RNA polymerase II-dependent genes. Mediator functions as a bridge to convey information from gene-specific regulatory proteins to the basal RNA polymerase II transcription machinery. The Mediator complex, having a compact conformation in its free form, is recruited to promoters by direct interactions with regulatory proteins and serves for the assembly of a functional pre-initiation complex with RNA polymerase II and the general transcription factors. The polypeptide is Mediator of RNA polymerase II transcription subunit 32 (MED32) (Arabidopsis thaliana (Mouse-ear cress)).